Consider the following 424-residue polypeptide: Methylenetetrahydrofolate--tRNA-(uracil-5-)-methyltransferase TrmFO 1 (424 aa).

FAD is bound at residue G8–G13.

Belongs to the MnmG family. TrmFO subfamily. FAD is required as a cofactor.

It localises to the cytoplasm. It carries out the reaction uridine(54) in tRNA + (6R)-5,10-methylene-5,6,7,8-tetrahydrofolate + NADH + H(+) = 5-methyluridine(54) in tRNA + (6S)-5,6,7,8-tetrahydrofolate + NAD(+). The enzyme catalyses uridine(54) in tRNA + (6R)-5,10-methylene-5,6,7,8-tetrahydrofolate + NADPH + H(+) = 5-methyluridine(54) in tRNA + (6S)-5,6,7,8-tetrahydrofolate + NADP(+). Its function is as follows. Catalyzes the folate-dependent formation of 5-methyl-uridine at position 54 (M-5-U54) in all tRNAs. This Mycoplasma mycoides subsp. mycoides SC (strain CCUG 32753 / NCTC 10114 / PG1) protein is Methylenetetrahydrofolate--tRNA-(uracil-5-)-methyltransferase TrmFO 1.